Reading from the N-terminus, the 133-residue chain is Small ribosomal subunit protein uS11 (133 aa).

This sequence belongs to the universal ribosomal protein uS11 family. Part of the 30S ribosomal subunit. Interacts with proteins S7 and S18. Binds to IF-3.

In terms of biological role, located on the platform of the 30S subunit, it bridges several disparate RNA helices of the 16S rRNA. Forms part of the Shine-Dalgarno cleft in the 70S ribosome. This chain is Small ribosomal subunit protein uS11, found in Bordetella avium (strain 197N).